We begin with the raw amino-acid sequence, 132 residues long: MVTIGSSSLVLFLFFVVFVQITYTALHRFSRLLCTFFSKIIEEGCVWYNKKHRFPNLYKYIYVYVYILHICFEKYVNVEIIVGIPLLIKAIILGIQNILEVLLKDLGIHKRESAILHNSINIIIIILYVYIH.

Positions 1–24 (MVTIGSSSLVLFLFFVVFVQITYT) are cleaved as a signal peptide. Transmembrane regions (helical) follow at residues 75–95 (YVNV…ILGI) and 112–132 (ESAI…VYIH).

The protein resides in the membrane. This is an uncharacterized protein from Saccharomyces cerevisiae (strain ATCC 204508 / S288c) (Baker's yeast).